Here is a 508-residue protein sequence, read N- to C-terminus: NADH-quinone oxidoreductase subunit N 1 (508 aa).

The next 13 helical transmembrane spans lie at 2-22 (ILGP…GALL), 47-67 (ALGT…VGFV), 87-107 (FTLF…LLAG), 126-146 (FSTV…LFLG), 175-195 (FLLG…IYGA), 220-240 (ALLL…VSAV), 260-280 (FMAV…LLGA), 291-311 (AGWP…ANLI), 321-341 (MLAY…AATV), 351-371 (VMFY…TLIL), 396-416 (ALAF…AGFF), 431-453 (YTLS…RVLV), and 479-499 (LVVS…SLGI).

This sequence belongs to the complex I subunit 2 family. NDH-1 is composed of 14 different subunits. Subunits NuoA, H, J, K, L, M, N constitute the membrane sector of the complex.

The protein resides in the cell inner membrane. It catalyses the reaction a quinone + NADH + 5 H(+)(in) = a quinol + NAD(+) + 4 H(+)(out). Its function is as follows. NDH-1 shuttles electrons from NADH, via FMN and iron-sulfur (Fe-S) centers, to quinones in the respiratory chain. The immediate electron acceptor for the enzyme in this species is believed to be ubiquinone. Couples the redox reaction to proton translocation (for every two electrons transferred, four hydrogen ions are translocated across the cytoplasmic membrane), and thus conserves the redox energy in a proton gradient. The polypeptide is NADH-quinone oxidoreductase subunit N 1 (Sorangium cellulosum (strain So ce56) (Polyangium cellulosum (strain So ce56))).